The primary structure comprises 385 residues: uncharacterized protein (385 aa).

Positions 180, 258, and 275 each coordinate Zn(2+).

The protein belongs to the iron-containing alcohol dehydrogenase family. Zn(2+) is required as a cofactor.

This is an uncharacterized protein from Synechocystis sp. (strain ATCC 27184 / PCC 6803 / Kazusa).